The following is a 118-amino-acid chain: Disulfide bond formation protein (118 aa).

The N-terminal stretch at 1–27 (MRAKWLWMTAVGSLLITVLTAWGWAAA) is a signal peptide. Positions 28–114 (SSQDSKIVYV…VAEAVLRSFF (87 aa)) constitute a Thioredoxin domain. A disulfide bond links cysteine 42 and cysteine 45.

It belongs to the thioredoxin family.

Its subcellular location is the secreted. Stimulates the oxidation and reduction of disulfide bonds in vitro. The protein is Disulfide bond formation protein (bdb) of Brevibacillus choshinensis.